A 4691-amino-acid chain; its full sequence is Plectin (4691 aa).

A globular 1 region spans residues 1 to 1478 (MVAGMLMPLD…SELTTLTSQY (1478 aa)). Residue R21 is modified to Phosphoserine. Position 26 is a phosphotyrosine (V26). Disordered stretches follow at residues 113–161 (RSPH…TPVV) and 167–186 (GTLA…RDRV). The span at 137-154 (DPAREERQVYRRKEREEG) shows a compositional bias: basic and acidic residues. An actin-binding region spans residues 181 to 411 (DERDRVQKKT…YVSSLYDAMP (231 aa)). Calponin-homology (CH) domains are found at residues 185 to 293 (RVQK…LHFQ) and 306 to 411 (MTAK…DAMP). Residues 653 to 727 (LQSTQRRPEL…ERARNDESQL (75 aa)) form a Spectrin 1 repeat. A Phosphoserine modification is found at S728. Spectrin repeat units follow at residues 748-832 (KLLN…REDH) and 845-938 (LQTQ…AIVQ). T823 is subject to Phosphothreonine. Residues 949–1006 (RGHVPLIAVCDYKQVEVTVHKGDQCQLVGPAQPSHWKVLSGSSSEAAVPSVCFLVPPP) enclose the SH3 domain. The segment at 963-4572 (VEVTVHKGDQ…ARTAQKLRDV (3610 aa)) is required for interaction with intermediate filament proteins. A Phosphoserine modification is found at S1055. The stretch at 1323–1423 (RERVTQLLER…QKFAKQYINA (101 aa)) is one Spectrin 4 repeat. S1443 bears the Phosphoserine mark. 2 coiled-coil regions span residues 1477 to 1697 (QYIK…ERRL) and 1729 to 2764 (SFAE…TTQA). Positions 1479–2762 (IKFISETLRR…ALAHSEIATT (1284 aa)) are central fibrous rod domain. The tract at residues 1626–1653 (RAEEAEAQKRQAQEEAERLRRQVQDESQ) is disordered. S1729 carries the phosphoserine modification. Residue K1733 is modified to N6-acetyllysine. Disordered regions lie at residues 1801-1835 (SLAQ…RELA), 2100-2141 (AEDT…SLAA), and 2223-2317 (RLRS…KHKK). Composition is skewed to basic and acidic residues over residues 1806–1835 (DAEK…RELA), 2100–2116 (AEDT…EAAR), 2124–2136 (EEQR…ERVQ), and 2223–2266 (RLRS…KQSA). The segment covering 2267–2280 (EEQAQAQAQAQAAA) has biased composition (low complexity). The segment covering 2281 to 2296 (EKLRKEAEQEAARRAQ) has biased composition (basic and acidic residues). S2639 carries the post-translational modification Phosphoserine. K2644 is modified (N6-acetyllysine). A disordered region spans residues 2675-2728 (LREEQQRQQQQMEQEKQELMASMEEARRRQREAEEGVRRKQEELQHLEQQRQQQ). The segment covering 2687-2728 (EQEKQELMASMEEARRRQREAEEGVRRKQEELQHLEQQRQQQ) has biased composition (basic and acidic residues). Residues 2763 to 4691 (QAASTKALPN…SLGGPESAVA (1929 aa)) form a globular 2 region. S2781 bears the Phosphoserine mark. Y2788 carries the phosphotyrosine modification. Plectin repeat units follow at residues 2795-2832 (QKVP…REDV), 2833-2870 (YRYL…PGTA), 2871-2908 (LILL…PELH), 2909-2946 (HKLL…RDHG), 2947-2984 (VRLL…EEMN), and 2988-3022 (SDPS…PETG). S2809 carries the phosphoserine modification. T2893 carries the phosphothreonine modification. Phosphotyrosine is present on Y3040. N6-acetyllysine is present on residues K3060 and K3098. Plectin repeat units lie at residues 3123 to 3160 (ALVP…ADSV), 3161 to 3198 (RQAL…PEVA), 3199 to 3236 (VALL…PELH), 3237 to 3274 (EKLL…REQG), 3275 to 3312 (LRLL…KETN), and 3315 to 3350 (LTSP…QLTG). Basic and acidic residues predominate over residues 3312–3326 (NRALTSPRDDARVYH). Residues 3312–3338 (NRALTSPRDDARVYHDPSTQEPVTYSQ) form a disordered region. Positions 3328–3338 (PSTQEPVTYSQ) are enriched in polar residues. At Y3369 the chain carries Phosphotyrosine. An N6-acetyllysine modification is found at K3427. 5 Plectin repeats span residues 3492–3529 (RTLL…PSTA), 3530–3567 (TLLL…PELH), 3568–3605 (EKLL…RDHA), 3606–3643 (IRLL…EEMN), and 3647–3681 (ADPS…PETG). T3792 is subject to Phosphothreonine. Y3797 carries the phosphotyrosine modification. Plectin repeat units follow at residues 3827–3864 (WRYL…AEVA), 3865–3902 (RLLL…PELH), 3903–3940 (DRLL…AEEA), 3941–3978 (LRLL…KDTH), and 3982–4015 (SEPS…DPSG). The tract at residues 3954-4291 (VDPRLGFHLP…KRRVVIVDPE (338 aa)) is required for interaction with type2 keratins, DES and VIM. T4037 is subject to Phosphothreonine. Residue S4061 is modified to Phosphoserine. Plectin repeat units lie at residues 4070–4107 (QKFL…PGTA), 4108–4145 (FELL…PEFK), 4146–4183 (DKLL…KDHG), 4184–4221 (IRLL…EEMN), 4225–4259 (TDPS…PQTG), and 4272–4312 (RKTS…HQTY). The tract at residues 4257–4307 (QTGLCLLPLKEKKRERKTSSKSSVRKRRVVIVDPETGKEMSVYEAYRKGLI) is binding to intermediate filaments. Residues 4387-4420 (FRSRSSSVGSSSSYPISSAGPRTQLASWSDPTEE) form a disordered region. S4389, S4391, S4392, S4393, S4396, S4397, S4398, and S4399 each carry phosphoserine. Low complexity predominate over residues 4389-4404 (SRSSSVGSSSSYPISS). Y4400 bears the Phosphotyrosine mark. Phosphoserine is present on residues S4403 and S4413. Over residues 4406–4416 (GPRTQLASWSD) the composition is skewed to polar residues. Plectin repeat units follow at residues 4415–4452 (SDPT…NITG), 4453–4490 (QRLL…KIMV), 4491–4528 (DRIN…YEAG), 4529–4566 (QRFL…ARTA), and 4567–4604 (QKLR…EGTG). At T4418 the chain carries Phosphothreonine. The tract at residues 4503–4572 (FEDPRTKTKM…ARTAQKLRDV (70 aa)) is required for efficient interaction with KRT5 and KRT14 heterodimers. Residue T4546 is modified to Phosphothreonine; by CDK1. Phosphoserine occurs at positions 4614 and 4620. Residues 4618–4678 (YYSPYSVSGS…SGYGRRYASG (61 aa)) show a composition bias toward low complexity. Residues 4618–4691 (YYSPYSVSGS…SLGGPESAVA (74 aa)) form a disordered region. Position 4622 is a phosphotyrosine (Y4622). S4623, S4625, and S4629 each carry phosphoserine. T4630 is subject to Phosphothreonine. A 4 X 4 AA tandem repeats of G-S-R-X region spans residues 4632–4647 (GSRTGSRTGSRAGSRR). Phosphoserine is present on S4633. R4634 and R4647 each carry omega-N-methylarginine. 2 positions are modified to phosphoserine: S4649 and S4682.

This sequence belongs to the plakin or cytolinker family. As to quaternary structure, homodimer or homotetramer. Interacts (via actin-binding domain) with SYNE3. Interacts (via calponin-homology (CH) 1 domain) with VIM (via rod region). Interacts (via N-terminus) with DST isoform 2 (via N-terminus). Interacts with FER. Interacts with TOR1A. Interacts with ANK3. Identified in complexes that contain VIM, EZR, AHNAK, BFSP1, BFSP2, ANK2, PLEC, PRX and spectrin. In terms of assembly, interacts with KRT14, heterodimers consisting of KRT8 and KRT18, heterodimers consisting of KRT5 and KRT14, heterodimers consisting of KRT14 and KRT15, and heterodimers consisting of KRT1 and KRT10. Interacts with DES and VIM. In terms of processing, phosphorylated by CDK1; regulates dissociation from intermediate filaments during mitosis. Isoform PLEC-1A is phosphorylated on Ser-21. Isoform PLEC-1A is phosphorylated on Tyr-26. In terms of tissue distribution, detected in eye lens fiber cells (at protein level). Expressed at high levels in lung, brain, small intestine, muscle, heart and skin with lower levels found in kidney, liver, uterus, spleen and salivary gland.

Its subcellular location is the cytoplasm. It is found in the cytoskeleton. The protein resides in the cell junction. It localises to the hemidesmosome. The protein localises to the cell projection. Its subcellular location is the podosome. Its function is as follows. Interlinks intermediate filaments with microtubules and microfilaments and anchors intermediate filaments to desmosomes or hemidesmosomes. May be involved not only in the cross-linking and stabilization of cytoskeletal intermediate filaments network, but also in the regulation of their dynamics. This chain is Plectin (Plec), found in Mus musculus (Mouse).